A 136-amino-acid chain; its full sequence is Nucleoside diphosphate kinase (136 aa).

Positions 10, 58, 86, 92, 104, and 114 each coordinate ATP. His117 acts as the Pros-phosphohistidine intermediate in catalysis.

Belongs to the NDK family. As to quaternary structure, homotetramer. Requires Mg(2+) as cofactor.

The protein resides in the cytoplasm. The catalysed reaction is a 2'-deoxyribonucleoside 5'-diphosphate + ATP = a 2'-deoxyribonucleoside 5'-triphosphate + ADP. It carries out the reaction a ribonucleoside 5'-diphosphate + ATP = a ribonucleoside 5'-triphosphate + ADP. In terms of biological role, major role in the synthesis of nucleoside triphosphates other than ATP. The ATP gamma phosphate is transferred to the NDP beta phosphate via a ping-pong mechanism, using a phosphorylated active-site intermediate. This Corynebacterium jeikeium (strain K411) protein is Nucleoside diphosphate kinase.